We begin with the raw amino-acid sequence, 293 residues long: Extracellular metalloprotease PODANS_2_14170 (293 aa).

The N-terminal stretch at 1-18 (MRFSLALAAAGLAQTAFA) is a signal peptide. Residue Asn-60 is glycosylated (N-linked (GlcNAc...) asparagine). Position 206 (His-206) interacts with Zn(2+). Glu-207 is a catalytic residue. His-210 provides a ligand contact to Zn(2+). Cysteines 242 and 269 form a disulfide.

The protein belongs to the peptidase M43B family.

The protein resides in the secreted. Secreted metalloproteinase that allows assimilation of proteinaceous substrates. The protein is Extracellular metalloprotease PODANS_2_14170 of Podospora anserina (strain S / ATCC MYA-4624 / DSM 980 / FGSC 10383) (Pleurage anserina).